The chain runs to 343 residues: F17g-G fimbrial adhesin (343 aa).

Positions 1-22 (MTNFYKVCLAVFILVCCNISHA) are cleaved as a signal peptide. Positions 23–199 (AVSFIGSTEN…LNPFTLNDTV (177 aa)) are receptor-binding lectin domain. A carbohydrate is bound by residues 65-66 (AN), 110-111 (DT), and 138-141 (STQG). Cysteines 75 and 132 form a disulfide. The fimbrillin-binding domain stretch occupies residues 200–343 (TSCRLLTPSA…GISTFTFSYQ (144 aa)). Positions 287-307 (LKFGPDSPVKGNENQWQLSTG) are disordered. The span at 298 to 307 (NENQWQLSTG) shows a compositional bias: polar residues.

The protein belongs to the fimbrial protein family.

The protein localises to the fimbrium. Its function is as follows. Essential fimbrial adhesion factor that mediates binding to N-acetylglucosamine-containing receptors in the host intestinal microvilli, leading to colonization of the intestinal tissue, and diarrhea or septicemia. Also confers adhesiveness to laminin and basement membranes. May be involved in the initiation of polymerization of fimbrillin monomers during fimbrial filament biogenesis. The protein is F17g-G fimbrial adhesin (f17gG) of Escherichia coli.